We begin with the raw amino-acid sequence, 332 residues long: T-cell surface glycoprotein CD1c2 (332 aa).

Residues 1-17 form the signal peptide; sequence MLFLQFLFVDVVLGGSI. Topologically, residues 18–300 are extracellular; it reads TENVVQENIS…IILYWGHGLS (283 aa). N-linked (GlcNAc...) asparagine glycosylation is found at N25, N38, and N75. 2 disulfide bridges follow: C120–C184 and C224–C279. The Ig-like domain maps to 205–292; the sequence is PEVWLSSSPN…HSSLRDQDII (88 aa). A helical membrane pass occupies residues 301–321; the sequence is VILIALAVIVPLVLLIVLVLL. At 322 to 332 the chain is on the cytoplasmic side; it reads CKKRCTYQGIP.

Heterodimer with B2M (beta-2-microglobulin).

It localises to the cell membrane. The protein resides in the endosome membrane. Antigen-presenting protein that binds self and non-self lipid and glycolipid antigens and presents them to T-cell receptors on natural killer T-cells. The chain is T-cell surface glycoprotein CD1c2 (CD1C2) from Cavia porcellus (Guinea pig).